A 419-amino-acid polypeptide reads, in one-letter code: Cyclin-B2-2 (419 aa).

The segment at 79–116 is disordered; the sequence is QPSSAPLAPIGSERQKRTADSAFHGPADMECTKITSDD.

Belongs to the cyclin family. Cyclin AB subfamily. Interacts with CDKB2-1. Expressed in the intercalary meristem and the elongation zone of internodes. Expressed in adventitious roots at all nodes under submergence conditions.

The protein resides in the nucleus. Functionally, involved in the control of the cell cycle at the G2/M (mitosis) transition. May associate to CDKB2-1 and activate CDKB2-1 kinase to promote cell division. In Oryza sativa subsp. indica (Rice), this protein is Cyclin-B2-2 (CYCB2-2).